The sequence spans 564 residues: ATP-dependent RNA helicase ROK1 (564 aa).

2 disordered regions span residues 1 to 25 (MDIF…KAAD) and 62 to 87 (EDDR…DGLI). Basic and acidic residues-rich tracts occupy residues 13–23 (VKKESGPKAKA) and 62–86 (EDDR…DDGL). A Q motif motif is present at residues 122 to 150 (DLISRFSFDRRLLNNLIENGFTEPTPIQC). Residues 153–333 (IPVALNNRDV…QSIMMDPVRV (181 aa)) form the Helicase ATP-binding domain. 166 to 173 (GPTGSGKT) serves as a coordination point for ATP. The short motif at 280-283 (DEAD) is the DEAD box element. In terms of domain architecture, Helicase C-terminal spans 344–506 (NIEQKLIFCG…EVSEWMDKMA (163 aa)). The segment at 512-564 (EKESIKNGKAHKERKQITTVPKMDKAKRRRQQEMIAASKRRKNEELSKKHFSK) is disordered. The span at 553 to 564 (KNEELSKKHFSK) shows a compositional bias: basic and acidic residues.

It belongs to the DEAD box helicase family. DDX52/ROK1 subfamily. Interacts with the U3 snoRNA and is associated with the 90S and 40S pre-ribosomes. This association requires the presence of RRP5. Also interacts with OSH3.

It is found in the nucleus. It localises to the nucleolus. It carries out the reaction ATP + H2O = ADP + phosphate + H(+). Functionally, ATP-dependent RNA helicase involved in 40S ribosomal subunit biogenesis. Required for the processing and cleavage of 35S pre-rRNA at sites A0, A1, and A2, leading to mature 18S rRNA. The polypeptide is ATP-dependent RNA helicase ROK1 (ROK1) (Saccharomyces cerevisiae (strain YJM789) (Baker's yeast)).